We begin with the raw amino-acid sequence, 271 residues long: Probable iron transport system membrane protein HI_0359 (271 aa).

8 consecutive transmembrane segments (helical) span residues 17 to 37, 55 to 75, 93 to 113, 131 to 151, 168 to 188, 194 to 214, 221 to 241, and 245 to 265; these read ALLTALIVSIICALLSCYLVL, IVLAYLAGIPLAIGAFFSGIF, TAMGIVFSGMFAIGLVMFTKI, SHQELIQSAVISAIIFCLIVF, VAGLSPKILHYGLLILLALTI, VVGVILVVAMLIAPGITALTL, MLWVAIASSIASSLIGVILSY, and ASTGACIILLQAAFFVIALAY.

This sequence belongs to the ABC-3 integral membrane protein family.

It localises to the cell inner membrane. Functionally, part of an ATP-driven transport system HI_0359/HI_0360/HI_0361/HI_0362 for iron. The chain is Probable iron transport system membrane protein HI_0359 from Haemophilus influenzae (strain ATCC 51907 / DSM 11121 / KW20 / Rd).